Reading from the N-terminus, the 250-residue chain is Small ribosomal subunit protein uS3 (250 aa).

Positions 39 to 107 (VREFLTKNLK…PAQVSINEID (69 aa)) constitute a KH type-2 domain. A disordered region spans residues 215–250 (MNPAPAEERPAKRGRGRGEGQERRGRRGDRAADKGE). The span at 220–250 (AEERPAKRGRGRGEGQERRGRRGDRAADKGE) shows a compositional bias: basic and acidic residues.

Belongs to the universal ribosomal protein uS3 family. In terms of assembly, part of the 30S ribosomal subunit. Forms a tight complex with proteins S10 and S14.

Its function is as follows. Binds the lower part of the 30S subunit head. Binds mRNA in the 70S ribosome, positioning it for translation. This chain is Small ribosomal subunit protein uS3, found in Acinetobacter baumannii (strain AB0057).